We begin with the raw amino-acid sequence, 423 residues long: Serine--tRNA ligase (423 aa).

An L-serine-binding site is contributed by 231-233 (TAE). 262-264 (RSE) contributes to the ATP binding site. Glu-285 lines the L-serine pocket. Residue 349 to 352 (EISS) participates in ATP binding. Ser-384 is a binding site for L-serine.

This sequence belongs to the class-II aminoacyl-tRNA synthetase family. Type-1 seryl-tRNA synthetase subfamily. Homodimer. The tRNA molecule binds across the dimer.

Its subcellular location is the cytoplasm. The enzyme catalyses tRNA(Ser) + L-serine + ATP = L-seryl-tRNA(Ser) + AMP + diphosphate + H(+). The catalysed reaction is tRNA(Sec) + L-serine + ATP = L-seryl-tRNA(Sec) + AMP + diphosphate + H(+). It functions in the pathway aminoacyl-tRNA biosynthesis; selenocysteinyl-tRNA(Sec) biosynthesis; L-seryl-tRNA(Sec) from L-serine and tRNA(Sec): step 1/1. Functionally, catalyzes the attachment of serine to tRNA(Ser). Is also able to aminoacylate tRNA(Sec) with serine, to form the misacylated tRNA L-seryl-tRNA(Sec), which will be further converted into selenocysteinyl-tRNA(Sec). In Acinetobacter baylyi (strain ATCC 33305 / BD413 / ADP1), this protein is Serine--tRNA ligase.